Consider the following 404-residue polypeptide: uncharacterized protein (404 aa).

Residues 262–278 (VSTGDTSPCGTEDSSPA) show a composition bias toward polar residues. Disordered stretches follow at residues 262–307 (VSTG…SPSL) and 319–340 (MKKS…SGAD). 3 positions are modified to phosphoserine: Ser268, Ser276, and Ser279. Phosphothreonine occurs at positions 290 and 293. A phosphoserine mark is found at Ser304, Ser306, Ser324, Ser358, and Ser362. Positions 319 to 336 (MKKSHSANDSEEFFREDD) are enriched in basic and acidic residues.

This is an uncharacterized protein from Mus musculus (Mouse).